A 272-amino-acid chain; its full sequence is Granaticin polyketide synthase putative ketoacyl reductase 1 (272 aa).

An NAD(+)-binding site is contributed by 21 to 45; it reads LVTGATSGIGLAIARRLAALGARTF. Residue Ser155 coordinates substrate. Catalysis depends on Tyr168, which acts as the Proton acceptor.

Belongs to the short-chain dehydrogenases/reductases (SDR) family.

The protein operates within antibiotic biosynthesis; granaticin biosynthesis. The chain is Granaticin polyketide synthase putative ketoacyl reductase 1 (gra-orf5) from Streptomyces violaceoruber.